We begin with the raw amino-acid sequence, 161 residues long: Ribosomal RNA large subunit methyltransferase H (161 aa).

S-adenosyl-L-methionine contacts are provided by residues leucine 78, glycine 110, and leucine 129 to phenylalanine 134.

This sequence belongs to the RNA methyltransferase RlmH family. In terms of assembly, homodimer.

The protein resides in the cytoplasm. It catalyses the reaction pseudouridine(1915) in 23S rRNA + S-adenosyl-L-methionine = N(3)-methylpseudouridine(1915) in 23S rRNA + S-adenosyl-L-homocysteine + H(+). Functionally, specifically methylates the pseudouridine at position 1915 (m3Psi1915) in 23S rRNA. This chain is Ribosomal RNA large subunit methyltransferase H, found in Heliobacterium modesticaldum (strain ATCC 51547 / Ice1).